The following is a 247-amino-acid chain: 1-(5-phosphoribosyl)-5-[(5-phosphoribosylamino)methylideneamino] imidazole-4-carboxamide isomerase (247 aa).

Aspartate 8 serves as the catalytic Proton acceptor. Aspartate 131 serves as the catalytic Proton donor.

It belongs to the HisA/HisF family.

The protein resides in the cytoplasm. The enzyme catalyses 1-(5-phospho-beta-D-ribosyl)-5-[(5-phospho-beta-D-ribosylamino)methylideneamino]imidazole-4-carboxamide = 5-[(5-phospho-1-deoxy-D-ribulos-1-ylimino)methylamino]-1-(5-phospho-beta-D-ribosyl)imidazole-4-carboxamide. It functions in the pathway amino-acid biosynthesis; L-histidine biosynthesis; L-histidine from 5-phospho-alpha-D-ribose 1-diphosphate: step 4/9. In Methylobacillus flagellatus (strain ATCC 51484 / DSM 6875 / VKM B-1610 / KT), this protein is 1-(5-phosphoribosyl)-5-[(5-phosphoribosylamino)methylideneamino] imidazole-4-carboxamide isomerase.